The chain runs to 523 residues: Maturase K (523 aa).

Belongs to the intron maturase 2 family. MatK subfamily.

It is found in the plastid. It localises to the chloroplast. In terms of biological role, usually encoded in the trnK tRNA gene intron. Probably assists in splicing its own and other chloroplast group II introns. The protein is Maturase K of Asphodeline lutea (King's spear).